The sequence spans 250 residues: FAS1 domain-containing protein AER383W (250 aa).

The first 18 residues, 1-18 (MRLKTILLGFCAFHVARS), serve as a signal peptide directing secretion. The region spanning 87 to 247 (GVTLDDRLQS…GIVLVIDSSL (161 aa)) is the FAS1 domain.

It is found in the vacuole. The chain is FAS1 domain-containing protein AER383W from Eremothecium gossypii (strain ATCC 10895 / CBS 109.51 / FGSC 9923 / NRRL Y-1056) (Yeast).